We begin with the raw amino-acid sequence, 690 residues long: Heterogeneous nuclear ribonucleoprotein M (690 aa).

Residues 1–13 (MAAGVEAAAEVAA) are compositionally biased toward low complexity. A disordered region spans residues 1-63 (MAAGVEAAAE…KRGGNRFEPY (63 aa)). A2 carries the post-translational modification N-acetylalanine. K17 participates in a covalent cross-link: Glycyl lysine isopeptide (Lys-Gly) (interchain with G-Cter in SUMO2). At S29 the chain carries Phosphoserine. Residues K37, K68, and K82 each participate in a glycyl lysine isopeptide (Lys-Gly) (interchain with G-Cter in SUMO2) cross-link. The span at 37–49 (KGEERPTQNEKRK) shows a compositional bias: basic and acidic residues. 2 consecutive RRM domains span residues 70-148 (YRAF…EDPD) and 164-241 (STVF…MDER). Phosphoserine is present on S85. Residues K87 and K126 each participate in a glycyl lysine isopeptide (Lys-Gly) (interchain with G-Cter in SUMO2) cross-link. K133 is modified (N6-acetyllysine; alternate). K133 is covalently cross-linked (Glycyl lysine isopeptide (Lys-Gly) (interchain with G-Cter in SUMO2); alternate). Residues K142 and K144 each participate in a glycyl lysine isopeptide (Lys-Gly) (interchain with G-Cter in SUMO2) cross-link. A Phosphoserine modification is found at S164. K181 is covalently cross-linked (Glycyl lysine isopeptide (Lys-Gly) (interchain with G-Cter in SUMO2)). At K237 the chain carries N6-acetyllysine; alternate. A Glycyl lysine isopeptide (Lys-Gly) (interchain with G-Cter in SUMO2); alternate cross-link involves residue K237. Glycyl lysine isopeptide (Lys-Gly) (interchain with G-Cter in SUMO2) cross-links involve residues K245 and K305. Phosphoserine is present on residues S325 and S337. Residues K341 and K348 each participate in a glycyl lysine isopeptide (Lys-Gly) (interchain with G-Cter in SUMO2) cross-link. At S357 the chain carries Phosphoserine. Tandem repeats lie at residues 360–365 (GIERMG), 367–372 (GIDRIS), 375–380 (GMERMG), and 386–391 (GMDRVG). Residues 360-568 (GIERMGPGID…ALGAGIERMG (209 aa)) are 27 X 6 AA repeats of [GEVSTPAN]-[ILMV]-[DE]-[RH]-[MLVI]-[GAV]. Position 392 is a phosphoserine (S392). 3 repeat units span residues 393-398 (EIERMG), 400-405 (VMDRMG), and 406-411 (SVERMG). A Phosphoserine modification is found at S412. 4 repeat units span residues 413–418 (GIERMG), 421–426 (GLDHMA), 428–433 (SIERMG), and 435–440 (TMERIG). S428 carries the post-translational modification Phosphoserine. S441 bears the Phosphoserine mark. Repeat copies occupy residues 442-447 (GVERMG), 453-458 (GLERMA), 460-465 (PIDRVG), 467-472 (TIERMG), 474-479 (GVERMG), 481-486 (AIERMG), 488-493 (SMDRMV), 500-505 (GLERMG), 507-512 (VMDRMA), 514-519 (GLERMG), 522-527 (NLERMG), 528-532 (LERMG), 535-540 (SLERMG), 541-545 (LERMG), 548-553 (SLERMG), and 563-568 (GIERMG). Position 456 is an omega-N-methylarginine (R456). The residue at position 488 (S488) is a Phosphoserine. S535 carries the post-translational modification Phosphoserine. S548 is modified (phosphoserine). 3 positions are modified to phosphoserine: S578, S593, and S597. K611 participates in a covalent cross-link: Glycyl lysine isopeptide (Lys-Gly) (interchain with G-Cter in SUMO2). In terms of domain architecture, RRM 3 spans 613-689 (CQIFVRNLPF…REIDVRIDRN (77 aa)). T625 bears the Phosphothreonine mark. A Glycyl lysine isopeptide (Lys-Gly) (interchain with G-Cter in SUMO2) cross-link involves residue K627. At K632 the chain carries N6-acetyllysine. Residues K645 and K652 each participate in a glycyl lysine isopeptide (Lys-Gly) (interchain with G-Cter in SUMO2) cross-link. K658 bears the N6-acetyllysine; alternate mark. Residue K658 forms a Glycyl lysine isopeptide (Lys-Gly) (interchain with G-Cter in SUMO2); alternate linkage. A Glycyl lysine isopeptide (Lys-Gly) (interchain with G-Cter in SUMO1); alternate cross-link involves residue K658. Phosphoserine is present on S661. A Glycyl lysine isopeptide (Lys-Gly) (interchain with G-Cter in SUMO2) cross-link involves residue K676.

Identified in the spliceosome C complex. Interacts with PPIA/CYPA. Post-translationally, sumoylated. Expressed in all tissues tested, including liver, heart, lung, skeletal muscle, kidney, stomach, large intestine, small intestine, pancreas, spleen, peritoneal macrophage and thyroid.

The protein resides in the nucleus matrix. Functionally, pre-mRNA binding protein, binds avidly to poly(G) and poly(U) RNA homopolymers. Involved in splicing. Acts as a receptor for carcinoembryonic antigen in Kupffer cells, may initiate a series of signaling events leading to tyrosine phosphorylation of proteins and induction of IL-1 alpha, IL-6, IL-10 and tumor necrosis factor alpha cytokines. This Rattus norvegicus (Rat) protein is Heterogeneous nuclear ribonucleoprotein M (Hnrnpm).